The following is a 200-amino-acid chain: uncharacterized protein (200 aa).

The signal sequence occupies residues 1-24 (MAIDKLPLLLFLSILLCLNRPVLS). 5 N-linked (GlcNAc...) asparagine glycosylation sites follow: Asn-44, Asn-72, Asn-99, Asn-124, and Asn-135. A lipid anchor (GPI-anchor amidated serine) is attached at Ser-174. Positions 175-200 (NGFTFGIGLVSYLVIFMYSSFCFFLF) are cleaved as a propeptide — removed in mature form.

This sequence belongs to the UPF0277 family.

Its subcellular location is the cell membrane. This is an uncharacterized protein from Arabidopsis thaliana (Mouse-ear cress).